A 636-amino-acid polypeptide reads, in one-letter code: Chaperone protein HtpG (636 aa).

The interval 1-344 (MTMSVETQKE…SNDLSLNVSR (344 aa)) is a; substrate-binding. The tract at residues 345 to 561 (EILQKDPIID…EQDLGMQMRQ (217 aa)) is b. Residues 562–636 (ILEASGQKVP…LNKLLVELSV (75 aa)) are c.

Belongs to the heat shock protein 90 family. As to quaternary structure, homodimer.

The protein localises to the cytoplasm. Its function is as follows. Molecular chaperone. Has ATPase activity. The protein is Chaperone protein HtpG of Pseudomonas fluorescens (strain SBW25).